Consider the following 296-residue polypeptide: Phosphatidylserine decarboxylase proenzyme (296 aa).

Catalysis depends on charge relay system; for autoendoproteolytic cleavage activity residues Asp-113, His-169, and Ser-256. The active-site Schiff-base intermediate with substrate; via pyruvic acid; for decarboxylase activity is Ser-256. Ser-256 is modified (pyruvic acid (Ser); by autocatalysis).

Belongs to the phosphatidylserine decarboxylase family. PSD-B subfamily. Prokaryotic type II sub-subfamily. Heterodimer of a large membrane-associated beta subunit and a small pyruvoyl-containing alpha subunit. Pyruvate is required as a cofactor. Is synthesized initially as an inactive proenzyme. Formation of the active enzyme involves a self-maturation process in which the active site pyruvoyl group is generated from an internal serine residue via an autocatalytic post-translational modification. Two non-identical subunits are generated from the proenzyme in this reaction, and the pyruvate is formed at the N-terminus of the alpha chain, which is derived from the carboxyl end of the proenzyme. The autoendoproteolytic cleavage occurs by a canonical serine protease mechanism, in which the side chain hydroxyl group of the serine supplies its oxygen atom to form the C-terminus of the beta chain, while the remainder of the serine residue undergoes an oxidative deamination to produce ammonia and the pyruvoyl prosthetic group on the alpha chain. During this reaction, the Ser that is part of the protease active site of the proenzyme becomes the pyruvoyl prosthetic group, which constitutes an essential element of the active site of the mature decarboxylase.

Its subcellular location is the cell membrane. It catalyses the reaction a 1,2-diacyl-sn-glycero-3-phospho-L-serine + H(+) = a 1,2-diacyl-sn-glycero-3-phosphoethanolamine + CO2. Its pathway is phospholipid metabolism; phosphatidylethanolamine biosynthesis; phosphatidylethanolamine from CDP-diacylglycerol: step 2/2. Its function is as follows. Catalyzes the formation of phosphatidylethanolamine (PtdEtn) from phosphatidylserine (PtdSer). The sequence is that of Phosphatidylserine decarboxylase proenzyme from Clostridium beijerinckii (strain ATCC 51743 / NCIMB 8052) (Clostridium acetobutylicum).